Here is a 279-residue protein sequence, read N- to C-terminus: Probable endonuclease 4 (279 aa).

The Zn(2+) site is built by histidine 69, histidine 109, glutamate 145, aspartate 179, histidine 182, histidine 216, aspartate 229, histidine 231, and glutamate 261.

The protein belongs to the AP endonuclease 2 family. It depends on Zn(2+) as a cofactor.

It carries out the reaction Endonucleolytic cleavage to 5'-phosphooligonucleotide end-products.. Functionally, endonuclease IV plays a role in DNA repair. It cleaves phosphodiester bonds at apurinic or apyrimidinic (AP) sites, generating a 3'-hydroxyl group and a 5'-terminal sugar phosphate. In Chlorobium luteolum (strain DSM 273 / BCRC 81028 / 2530) (Pelodictyon luteolum), this protein is Probable endonuclease 4.